The following is a 615-amino-acid chain: Dihydroxy-acid dehydratase (615 aa).

Asp83 lines the Mg(2+) pocket. Cys124 lines the [2Fe-2S] cluster pocket. Residues Asp125 and Lys126 each contribute to the Mg(2+) site. At Lys126 the chain carries N6-carboxylysine. Residue Cys199 coordinates [2Fe-2S] cluster. Residue Glu495 participates in Mg(2+) binding. The active-site Proton acceptor is Ser521.

Belongs to the IlvD/Edd family. In terms of assembly, homodimer. It depends on [2Fe-2S] cluster as a cofactor. The cofactor is Mg(2+).

The catalysed reaction is (2R)-2,3-dihydroxy-3-methylbutanoate = 3-methyl-2-oxobutanoate + H2O. It catalyses the reaction (2R,3R)-2,3-dihydroxy-3-methylpentanoate = (S)-3-methyl-2-oxopentanoate + H2O. It functions in the pathway amino-acid biosynthesis; L-isoleucine biosynthesis; L-isoleucine from 2-oxobutanoate: step 3/4. The protein operates within amino-acid biosynthesis; L-valine biosynthesis; L-valine from pyruvate: step 3/4. Functionally, functions in the biosynthesis of branched-chain amino acids. Catalyzes the dehydration of (2R,3R)-2,3-dihydroxy-3-methylpentanoate (2,3-dihydroxy-3-methylvalerate) into 2-oxo-3-methylpentanoate (2-oxo-3-methylvalerate) and of (2R)-2,3-dihydroxy-3-methylbutanoate (2,3-dihydroxyisovalerate) into 2-oxo-3-methylbutanoate (2-oxoisovalerate), the penultimate precursor to L-isoleucine and L-valine, respectively. The sequence is that of Dihydroxy-acid dehydratase from Corynebacterium jeikeium (strain K411).